We begin with the raw amino-acid sequence, 361 residues long: Mycothiol acetyltransferase (361 aa).

N-acetyltransferase domains are found at residues 25-173 and 195-361; these read PRVR…LPGS and VTVL…AWKF. E59 lines the 1D-myo-inositol 2-(L-cysteinylamino)-2-deoxy-alpha-D-glucopyranoside pocket. Residue 98 to 100 participates in acetyl-CoA binding; the sequence is LAV. E229, K280, and E295 together coordinate 1D-myo-inositol 2-(L-cysteinylamino)-2-deoxy-alpha-D-glucopyranoside. Acetyl-CoA contacts are provided by residues 299–301 and 306–312; these read IGL and QGRGLGR. A 1D-myo-inositol 2-(L-cysteinylamino)-2-deoxy-alpha-D-glucopyranoside-binding site is contributed by Y333. 338–343 is a binding site for acetyl-CoA; sequence NAPAVH.

The protein belongs to the acetyltransferase family. MshD subfamily. As to quaternary structure, monomer.

The catalysed reaction is 1D-myo-inositol 2-(L-cysteinylamino)-2-deoxy-alpha-D-glucopyranoside + acetyl-CoA = mycothiol + CoA + H(+). Functionally, catalyzes the transfer of acetyl from acetyl-CoA to desacetylmycothiol (Cys-GlcN-Ins) to form mycothiol. This is Mycothiol acetyltransferase from Corynebacterium kroppenstedtii (strain DSM 44385 / JCM 11950 / CIP 105744 / CCUG 35717).